A 261-amino-acid chain; its full sequence is Chitinase 8 (261 aa).

The first 29 residues, 1-29, serve as a signal peptide directing secretion; it reads MTTTTTRFVQLAACAAASLLAVAASGAAA. 2 disulfide bridges follow: cysteine 53–cysteine 115 and cysteine 221–cysteine 253. Glutamate 98 (proton donor) is an active-site residue.

The protein belongs to the glycosyl hydrolase 19 family. Chitinase class II subfamily. In terms of tissue distribution, expressed in roots, leaves, sheaths and meristems.

The enzyme catalyses Random endo-hydrolysis of N-acetyl-beta-D-glucosaminide (1-&gt;4)-beta-linkages in chitin and chitodextrins.. This is Chitinase 8 (Cht8) from Oryza sativa subsp. japonica (Rice).